Here is a 339-residue protein sequence, read N- to C-terminus: Putative clathrin assembly protein At1g14686 (339 aa).

An ENTH domain is found at 16–148 (SLIAADDILT…ILFHDGNRHR (133 aa)). Positions 283–307 (ESSEESAERTEIAEEEEEEEEEIET) are disordered. Positions 295-305 (AEEEEEEEEEI) are enriched in acidic residues.

It is found in the membrane. The protein localises to the clathrin-coated pit. The protein resides in the golgi apparatus. It localises to the cytoplasmic vesicle. Its subcellular location is the clathrin-coated vesicle. The polypeptide is Putative clathrin assembly protein At1g14686 (Arabidopsis thaliana (Mouse-ear cress)).